Here is a 374-residue protein sequence, read N- to C-terminus: Agmatine deiminase (374 aa).

Asp-220 and Asp-226 together coordinate agmatine. Catalysis depends on Cys-366, which acts as the Amidino-cysteine intermediate.

The protein belongs to the agmatine deiminase family. Forms homodimers.

It carries out the reaction agmatine + H2O = N-carbamoylputrescine + NH4(+). It participates in amine and polyamine biosynthesis; putrescine biosynthesis via agmatine pathway; N-carbamoylputrescine from agmatine: step 1/1. Functionally, mediates the hydrolysis of agmatine into N-carbamoylputrescine in the arginine decarboxylase (ADC) pathway of putrescine biosynthesis, a basic polyamine. The polypeptide is Agmatine deiminase (Medicago truncatula (Barrel medic)).